An 853-amino-acid chain; its full sequence is Transcription factor macR (853 aa).

Residues 18–45 (CIVCRRRKVRCGREQPECANCVRMKENC) constitute a DNA-binding region (zn(2)-C6 fungal-type). 4 disordered regions span residues 54–122 (ESTG…PYPT), 138–166 (ANAP…PTPS), 734–775 (ASDL…AGNK), and 833–853 (LGSQ…DFPG). 3 stretches are compositionally biased toward polar residues: residues 104–116 (PQVS…SPQR), 141–163 (PQIN…SLFP), and 738–752 (RATS…SSTT).

The protein localises to the nucleus. Functionally, transcription factor that regulates the expression of the gene cluster that mediates the biosynthesis of macrophorins, isoprenoid epoxycyclohexenones containing cyclized drimane moieties. The chain is Transcription factor macR from Penicillium terrestre.